The following is a 67-amino-acid chain: Sec-independent protein translocase protein TatA (67 aa).

The chain crosses the membrane as a helical span at residues 1–21 (MFGLGGQELVLILLIVLLLFG).

The protein belongs to the TatA/E family. Forms a complex with TatC.

It localises to the cell inner membrane. Its function is as follows. Part of the twin-arginine translocation (Tat) system that transports large folded proteins containing a characteristic twin-arginine motif in their signal peptide across membranes. TatA could form the protein-conducting channel of the Tat system. The polypeptide is Sec-independent protein translocase protein TatA (Chlorobaculum tepidum (strain ATCC 49652 / DSM 12025 / NBRC 103806 / TLS) (Chlorobium tepidum)).